A 706-amino-acid polypeptide reads, in one-letter code: Lethal(3)malignant brain tumor-like protein 2 (706 aa).

The disordered stretch occupies residues 1–85 (MEKPRGVEET…GTPRSLDGSG (85 aa)). A Phosphoserine modification is found at Ser-13. Residues 15 to 26 (PMEEEEEDDDLE) show a composition bias toward acidic residues. Positions 39–50 (SSAGSESSSYLE) are enriched in low complexity. Over residues 54 to 63 (EAEHEDREAG) the composition is skewed to basic and acidic residues. A Phosphoserine modification is found at Ser-68. Thr-77 is modified (phosphothreonine). The FCS-type zinc-finger motif lies at 82-117 (DGSGSEPAVCEMCGIVGTREAFFSKTKRFCSVSCSR). The Zn(2+) site is built by Cys-91, Cys-94, Cys-111, and Cys-115. 4 MBT repeats span residues 180 to 284 (FDWG…LVPP), 292 to 392 (TDWK…IKLS), 398 to 501 (MAHH…LTPP), and 509 to 605 (FSWE…LQPP). Ser-339 is subject to Phosphoserine. Lys-406 participates in a covalent cross-link: Glycyl lysine isopeptide (Lys-Gly) (interchain with G-Cter in SUMO2). The disordered stretch occupies residues 606–669 (VATEPTTPLK…KAPSEPAPDE (64 aa)). Over residues 620 to 635 (TKKKKKQFGKKRKRIP) the composition is skewed to basic residues. Residues Lys-648, Lys-660, and Lys-676 each participate in a glycyl lysine isopeptide (Lys-Gly) (interchain with G-Cter in SUMO2) cross-link. Residues 685 to 706 (ADKALSPELPVPVENIKQETDD) are disordered. Residue Ser-690 is modified to Phosphoserine. A Glycyl lysine isopeptide (Lys-Gly) (interchain with G-Cter in SUMO1); alternate cross-link involves residue Lys-701. Lys-701 participates in a covalent cross-link: Glycyl lysine isopeptide (Lys-Gly) (interchain with G-Cter in SUMO2); alternate.

Part of the E2F6.com-1 complex in G0 phase composed of E2F6, MGA, MAX, TFDP1, CBX3, BAT8, EUHMTASE1, RING1, RNF2, MBLR, BAT8 and YAF2.

The protein localises to the nucleus. Functionally, putative Polycomb group (PcG) protein. PcG proteins maintain the transcriptionally repressive state of genes, probably via a modification of chromatin, rendering it heritably changed in its expressibility. Its association with a chromatin-remodeling complex suggests that it may contribute to prevent expression of genes that trigger the cell into mitosis. Binds to monomethylated and dimethylated 'Lys-20' on histone H4. Binds histone H3 peptides that are monomethylated or dimethylated on 'Lys-4', 'Lys-9' or 'Lys-27'. The chain is Lethal(3)malignant brain tumor-like protein 2 (L3MBTL2) from Bos taurus (Bovine).